A 351-amino-acid polypeptide reads, in one-letter code: Divinyl chlorophyll a/b light-harvesting protein PcbA (351 aa).

Helical transmembrane passes span 27–47, 64–84, 89–109, 202–222, 242–262, and 305–325; these read FIAA…AFTL, LIAL…GTFV, VTAI…GGLL, VMGG…FHIA, AILS…AFWC, and LTNV…WHAL.

The protein belongs to the PsbB/PsbC family. IsiA/Pcb subfamily. In terms of assembly, the antenna complex consists of divinyl chlorophylls (a and b) and divinyl chlorophyll a/b binding proteins and binds more divinyl chlorophyll b than does the antenna complex from high-light-adapted Prochlorococcus. Divinyl chlorophyll a serves as cofactor. Divinyl chlorophyll b is required as a cofactor.

The protein resides in the cellular thylakoid membrane. Its function is as follows. The antenna complex functions as a light receptor, it captures and delivers excitation energy to photosystems II and I. The Prochlorales pcb genes are not related to higher plant LHCs. In Prochlorococcus marinus (strain SARG / CCMP1375 / SS120), this protein is Divinyl chlorophyll a/b light-harvesting protein PcbA (pcbA).